Reading from the N-terminus, the 357-residue chain is Heat-inducible transcription repressor HrcA (357 aa).

This sequence belongs to the HrcA family.

Negative regulator of class I heat shock genes (grpE-dnaK-dnaJ and groELS operons). Prevents heat-shock induction of these operons. The polypeptide is Heat-inducible transcription repressor HrcA (Chlorobium luteolum (strain DSM 273 / BCRC 81028 / 2530) (Pelodictyon luteolum)).